Consider the following 203-residue polypeptide: SPbeta prophage-derived uncharacterized protein YouA (203 aa).

Residues 1 to 23 (MAFLNQDGDKYTSAKDDGTGNPI) are disordered. Positions 7-18 (DGDKYTSAKDDG) are enriched in basic and acidic residues.

The polypeptide is SPbeta prophage-derived uncharacterized protein YouA (youA) (Bacillus subtilis (strain 168)).